The primary structure comprises 464 residues: Putative guanine nucleotide-binding protein subunit alpha (464 aa).

The region spanning 33 to 415 (HSKLKRGDGP…ETKRDKYNEK (383 aa)) is the G-alpha domain. A G1 motif region spans residues 36 to 49 (LKRGDGPGESGKST). GTP-binding positions include 41 to 48 (GPGESGKS), 147 to 151 (DVGGQ), 214 to 220 (LRSRTKT), 239 to 243 (DVGGQ), 268 to 271 (RNRD), and 310 to 313 (TSQS). Residue Ser-48 coordinates Mg(2+). A G2 motif region spans residues 212–220 (DVLRSRTKT). Position 220 (Thr-220) interacts with Mg(2+). Positions 235 to 244 (FRMVDVGGQR) are G3 motif. Residues 306–313 (VMFLTSQS) are G4 motif. Positions 382–387 (GYSGTC) are G5 motif.

The protein in the N-terminal section; belongs to the G-alpha family. This sequence in the C-terminal section; belongs to the class-II aminoacyl-tRNA synthetase family. In terms of assembly, g proteins are composed of 3 units; alpha, beta and gamma. The alpha chain contains the guanine nucleotide binding site.

Its function is as follows. Guanine nucleotide-binding proteins (G proteins) are involved as modulators or transducers in various transmembrane signaling systems. This is Putative guanine nucleotide-binding protein subunit alpha from Leishmania donovani.